The chain runs to 276 residues: Large ribosomal subunit protein uL2 (276 aa).

The tract at residues 226 to 276 (MNSVDHPHGGGEGKTSGGRHPVSPWGTPTKGYKTRSNKRTDKLILRHRNKG) is disordered.

It belongs to the universal ribosomal protein uL2 family. As to quaternary structure, part of the 50S ribosomal subunit. Forms a bridge to the 30S subunit in the 70S ribosome.

Its function is as follows. One of the primary rRNA binding proteins. Required for association of the 30S and 50S subunits to form the 70S ribosome, for tRNA binding and peptide bond formation. It has been suggested to have peptidyltransferase activity; this is somewhat controversial. Makes several contacts with the 16S rRNA in the 70S ribosome. The chain is Large ribosomal subunit protein uL2 from Vesicomyosocius okutanii subsp. Calyptogena okutanii (strain HA).